Consider the following 410-residue polypeptide: Acetate kinase (410 aa).

Mg(2+) is bound at residue Asn-7. Residue Lys-14 coordinates ATP. Arg-88 is a substrate binding site. The active-site Proton donor/acceptor is Asp-145. ATP contacts are provided by residues His-203–Gly-207, Asp-278–Arg-280, and Gly-326–Asn-330. Glu-379 contacts Mg(2+).

This sequence belongs to the acetokinase family. In terms of assembly, homodimer. Requires Mg(2+) as cofactor. Mn(2+) is required as a cofactor.

It is found in the cytoplasm. It catalyses the reaction acetate + ATP = acetyl phosphate + ADP. The protein operates within metabolic intermediate biosynthesis; acetyl-CoA biosynthesis; acetyl-CoA from acetate: step 1/2. In terms of biological role, catalyzes the formation of acetyl phosphate from acetate and ATP. Can also catalyze the reverse reaction. The sequence is that of Acetate kinase from Chlorante-Aster yellows phytoplasma.